The primary structure comprises 421 residues: MNTLQRRKTHQVLIDHITVGSEAPVVIQSMTNTDTADAKATALQIKELSDAGSEMVRITVNSPEAASKVAEIRRRLDDMGYATPLIGDFHFNGERLLAEFPECGKALSKYRINPGNVGKGVKGDEKFAFMIRTAAENDKAVRIGVNWGSLDQSLAKRMMDANLVSSAPKPPEEVMKEALIVSALESAEKAVLLGLPEDKIILSCKVSAVHDLIQVYRELGSRCVYPLHLGLTEAGMGSKGIVASTAALSVLLQEGIGDTIRISLTPEPGSPRTQEVVVGQEILQTMGLRSFTPMVTACPGCGRTTSTVFQELAQDVQNYLRQKMSIWRTLYPGVESLNVAVMGCVVNGPGESKLADIGISLPGTGETPVAPVYVDGERKVTLKGNNIASEFLAIVEEYVKTNYGKNSSKRNKGKVIPIQSL.

[4Fe-4S] cluster-binding residues include cysteine 298, cysteine 301, cysteine 344, and glutamate 351.

It belongs to the IspG family. The cofactor is [4Fe-4S] cluster.

The catalysed reaction is (2E)-4-hydroxy-3-methylbut-2-enyl diphosphate + oxidized [flavodoxin] + H2O + 2 H(+) = 2-C-methyl-D-erythritol 2,4-cyclic diphosphate + reduced [flavodoxin]. It participates in isoprenoid biosynthesis; isopentenyl diphosphate biosynthesis via DXP pathway; isopentenyl diphosphate from 1-deoxy-D-xylulose 5-phosphate: step 5/6. Converts 2C-methyl-D-erythritol 2,4-cyclodiphosphate (ME-2,4cPP) into 1-hydroxy-2-methyl-2-(E)-butenyl 4-diphosphate. This Neisseria gonorrhoeae (strain ATCC 700825 / FA 1090) protein is 4-hydroxy-3-methylbut-2-en-1-yl diphosphate synthase (flavodoxin).